A 169-amino-acid chain; its full sequence is Interleukin-36 gamma (169 aa).

A propeptide spanning residues 1–17 (MRGTPGDADGGGRAVYQ) is cleaved from the precursor.

This sequence belongs to the IL-1 family. Interacts with cargo receptor TMED10; the interaction mediates the translocation from the cytoplasm into the ERGIC (endoplasmic reticulum-Golgi intermediate compartment) and thereby secretion. In terms of processing, N-terminal truncation leads to a dramatic enhancement of its activity (&gt;1000-fold). Proteolytically cleaved by cathepsin CTSG. In terms of tissue distribution, highly expressed in tissues containing epithelial cells: skin, lung, stomach and esophagus. Expressed in bronchial epithelial. In skin is expressed only in keratinocytes but not in fibroblasts, endothelial cells or melanocytes. Up-regulated in lesional psoriasis skin. Expressed in monocyte-derived dendritic cells and M1 macrophages.

It is found in the cytoplasm. It localises to the secreted. In terms of biological role, cytokine that binds to and signals through the IL1RL2/IL-36R receptor which in turn activates NF-kappa-B and MAPK signaling pathways in target cells. Part of the IL-36 signaling system that is thought to be present in epithelial barriers and to take part in local inflammatory response; similar to the IL-1 system with which it shares the coreceptor IL1RAP. Seems to be involved in skin inflammatory response by acting on keratinocytes, dendritic cells and indirectly on T-cells to drive tissue infiltration, cell maturation and cell proliferation. In cultured keratinocytes induces the expression of macrophage, T-cell, and neutrophil chemokines, such as CCL3, CCL4, CCL5, CCL2, CCL17, CCL22, CL20, CCL5, CCL2, CCL17, CCL22, CXCL8, CCL20 and CXCL1; also stimulates its own expression and that of the prototypic cutaneous pro-inflammatory parameters TNF-alpha, S100A7/psoriasin and inducible NOS. May play a role in pro-inflammatory responses during particular neutrophilic airway inflammation: activates mitogen-activated protein kinases and NF-kappa B in primary lung fibroblasts, and stimulates the expression of IL-8 and CXCL3 and Th17 chemokine CCL20 in lung fibroblasts. May be involved in the innate immune response to fungal pathogens, such as Aspergillus fumigatus. This is Interleukin-36 gamma from Homo sapiens (Human).